The sequence spans 622 residues: Signal recognition particle subunit SRP68 (622 aa).

Residues 576–622 form a disordered region; sequence RDATPKKAAKGSSAAAASSKTSNQEEEEQQGLTGMLSGWKKSFWGNK. A compositionally biased stretch (low complexity) spans 585 to 595; the sequence is KGSSAAAASSK.

The protein belongs to the SRP68 family. Heterodimer with srpa-72. Srpa-68/srpa-72 heterodimer formation is stabilized by the presence of 7SL RNA. Component of a signal recognition particle (SRP) complex that consists of a 7SL RNA molecule of 300 nucleotides and six protein subunits: srpa-72, srpa-68, SRP54, F37F2.2/SRP19, F25G6.8/SRP14 and ZK512.4/SRP9. Within the SRP complex, interacts (via C-terminus) with srpa-72 (via N-terminus).

It is found in the cytoplasm. The protein resides in the nucleus. It localises to the nucleolus. The protein localises to the endoplasmic reticulum. Functionally, component of the signal recognition particle (SRP) complex, a ribonucleoprotein complex that mediates the cotranslational targeting of secretory and membrane proteins to the endoplasmic reticulum (ER). The SRP complex interacts with the signal sequence in nascent secretory and membrane proteins and directs them to the membrane of the ER. The SRP complex targets the ribosome-nascent chain complex to the SRP receptor (SR), which is anchored in the ER, where SR compaction and GTPase rearrangement drive cotranslational protein translocation into the ER. Binds the signal recognition particle RNA (7SL RNA), srpa-72 binds to this complex subsequently. The SRP complex possibly participates in the elongation arrest function. This Caenorhabditis elegans protein is Signal recognition particle subunit SRP68.